The primary structure comprises 343 residues: Uroporphyrinogen decarboxylase (343 aa).

Substrate contacts are provided by residues 23–27, aspartate 73, tyrosine 150, serine 205, and histidine 322; that span reads RQAGR.

This sequence belongs to the uroporphyrinogen decarboxylase family. In terms of assembly, homodimer.

The protein resides in the cytoplasm. The catalysed reaction is uroporphyrinogen III + 4 H(+) = coproporphyrinogen III + 4 CO2. It functions in the pathway porphyrin-containing compound metabolism; protoporphyrin-IX biosynthesis; coproporphyrinogen-III from 5-aminolevulinate: step 4/4. Its function is as follows. Catalyzes the decarboxylation of four acetate groups of uroporphyrinogen-III to yield coproporphyrinogen-III. This chain is Uroporphyrinogen decarboxylase, found in Cereibacter sphaeroides (strain KD131 / KCTC 12085) (Rhodobacter sphaeroides).